The following is a 392-amino-acid chain: L-rhamnonate dehydratase (392 aa).

Substrate is bound by residues His22 and Arg48. Mg(2+)-binding residues include Asp214, Glu240, and Glu268. The active-site Proton acceptor is the His318. Substrate is bound at residue Glu338.

It belongs to the mandelate racemase/muconate lactonizing enzyme family. RhamD subfamily. In terms of assembly, homooctamer; tetramer of dimers. It depends on Mg(2+) as a cofactor.

The enzyme catalyses L-rhamnonate = 2-dehydro-3-deoxy-L-rhamnonate + H2O. Catalyzes the dehydration of L-rhamnonate to 2-keto-3-deoxy-L-rhamnonate (KDR). The chain is L-rhamnonate dehydratase from Burkholderia orbicola (strain MC0-3).